Reading from the N-terminus, the 610-residue chain is UvrABC system protein C (610 aa).

Residues 16 to 94 enclose the GIY-YIG domain; sequence SQPGVYRMYD…IKLYQPRYNV (79 aa). The region spanning 204-239 is the UVR domain; that stretch reads DQVLTQLISRMETASQNLEFEEAARIRDQIQAVRRV.

It belongs to the UvrC family. In terms of assembly, interacts with UvrB in an incision complex.

The protein localises to the cytoplasm. Functionally, the UvrABC repair system catalyzes the recognition and processing of DNA lesions. UvrC both incises the 5' and 3' sides of the lesion. The N-terminal half is responsible for the 3' incision and the C-terminal half is responsible for the 5' incision. The polypeptide is UvrABC system protein C (Escherichia coli (strain UTI89 / UPEC)).